The primary structure comprises 556 residues: CBS domain-containing protein CBSCBSPB3 (556 aa).

Polar residues-rich tracts occupy residues 1 to 20 and 30 to 44; these read MSTQ…NSTV and PVQS…NTSK. A disordered region spans residues 1–63; it reads MSTQATGPSS…SQAPSNGERT (63 aa). Position 2 is an N-acetylserine (Ser-2). CBS domains lie at 68-127, 134-189, 235-294, and 302-360; these read RLSK…RPDQ, MTRN…RMEK, ITDN…LSPE, and MTPN…ENSS. The PB1 domain maps to 414–502; it reads GNSFSFKFED…KVLRLHLDFT (89 aa). Residues 527–549 form a helical membrane-spanning segment; it reads WVSWRGGVVVTGAVVLTSIAIVV.

The protein resides in the membrane. The sequence is that of CBS domain-containing protein CBSCBSPB3 (CBSCBSPB3) from Arabidopsis thaliana (Mouse-ear cress).